The sequence spans 556 residues: 2-succinyl-5-enolpyruvyl-6-hydroxy-3-cyclohexene-1-carboxylate synthase (556 aa).

This sequence belongs to the TPP enzyme family. MenD subfamily. As to quaternary structure, homodimer. Requires Mg(2+) as cofactor. The cofactor is Mn(2+). It depends on thiamine diphosphate as a cofactor.

The catalysed reaction is isochorismate + 2-oxoglutarate + H(+) = 5-enolpyruvoyl-6-hydroxy-2-succinyl-cyclohex-3-ene-1-carboxylate + CO2. Its pathway is quinol/quinone metabolism; 1,4-dihydroxy-2-naphthoate biosynthesis; 1,4-dihydroxy-2-naphthoate from chorismate: step 2/7. It functions in the pathway quinol/quinone metabolism; menaquinone biosynthesis. Catalyzes the thiamine diphosphate-dependent decarboxylation of 2-oxoglutarate and the subsequent addition of the resulting succinic semialdehyde-thiamine pyrophosphate anion to isochorismate to yield 2-succinyl-5-enolpyruvyl-6-hydroxy-3-cyclohexene-1-carboxylate (SEPHCHC). This is 2-succinyl-5-enolpyruvyl-6-hydroxy-3-cyclohexene-1-carboxylate synthase from Enterobacter sp. (strain 638).